Consider the following 192-residue polypeptide: Small ribosomal subunit protein uS5 (192 aa).

The S5 DRBM domain occupies 20–83; that stretch reads FVDKLVHINR…EAAKRGLIRV (64 aa). Positions 162–192 are disordered; it reads SVAARRGLKVSALQARRRDADPADTSDAAVA.

This sequence belongs to the universal ribosomal protein uS5 family. As to quaternary structure, part of the 30S ribosomal subunit. Contacts proteins S4 and S8.

With S4 and S12 plays an important role in translational accuracy. Its function is as follows. Located at the back of the 30S subunit body where it stabilizes the conformation of the head with respect to the body. In Methylorubrum populi (strain ATCC BAA-705 / NCIMB 13946 / BJ001) (Methylobacterium populi), this protein is Small ribosomal subunit protein uS5.